The primary structure comprises 1432 residues: Superkiller protein 3 (1432 aa).

TPR repeat units lie at residues 4–37 (IKQLLKEAKQELTNRDYEETIEISEKVLKLDPDN) and 47–80 (ALSSLPASNNVSSNRNLERATNHYVSAAKLVPDN). The interval 339–397 (SANKPPEGHKKTEKETDIKDVDETNEDEVKDRVEDEVKDRVEDEVKDQDEEAKEDEEED) is disordered. Residues 344–381 (PEGHKKTEKETDIKDVDETNEDEVKDRVEDEVKDRVED) are compositionally biased toward basic and acidic residues. Acidic residues predominate over residues 382–397 (EVKDQDEEAKEDEEED). 9 TPR repeats span residues 425–458 (ILAHRILCQYYLLTKEYEAALPYIKNGISLIAYN), 471–507 (REFSLDLATVYTYVDAPKDHNAALKLYDNILSGDFSN), 508–541 (IQAKMGKGIIFIERKNWKDAMTLLTQVHEQSPNN), 627–661 (APGFSTLGDIYCHYYKDHLRAFKCYFKAFDLDAGD), 702–735 (NWPFRVVGIAHLEKQEESDSIEWFQSALRVDPND), 736–769 (VESWVGLGQAYHACGRIEASIKVFDKAIQLRPSH), 945–985 (ASYW…QSNT), 987–1018 (ETWIGLGIATMDINFRVSQHCFIKATALEPKA), and 1226–1259 (ISNHICLGLSYFFLNDFDQTLNQFQELLSISKDS).

Belongs to the SKI3 family. In terms of assembly, component of the SKI complex composed of at least SKI2, SKI3 and SKI8. The SKI complex interacts with SKI7, which makes the link between the SKI complex and the exosome in order to perform mRNA degradation.

It is found in the cytoplasm. The protein resides in the nucleus. Its function is as follows. Component of the SKI complex involved in 3'-mRNA degradation pathway. Represses dsRNA virus propagation by specifically blocking translation of viral mRNAs, perhaps recognizing the absence of CAP or poly(A). Essential for cell growth only in the presence of M1 replicon. This chain is Superkiller protein 3 (SKI3), found in Saccharomyces cerevisiae (strain ATCC 204508 / S288c) (Baker's yeast).